Reading from the N-terminus, the 776-residue chain is Homoaconitase, mitochondrial (776 aa).

The transit peptide at 1–38 (MQSRLVSQSGLGRRWAVLRCALSKTYQRRTLTSTRRQF) directs the protein to the mitochondrion. 3 residues coordinate [4Fe-4S] cluster: cysteine 394, cysteine 463, and cysteine 466.

This sequence belongs to the aconitase/IPM isomerase family. It depends on [4Fe-4S] cluster as a cofactor.

It localises to the mitochondrion. It catalyses the reaction (2R,3S)-homoisocitrate = cis-homoaconitate + H2O. Its pathway is amino-acid biosynthesis; L-lysine biosynthesis via AAA pathway; L-alpha-aminoadipate from 2-oxoglutarate: step 3/5. Its function is as follows. Catalyzes the reversible hydration of cis-homoaconitate to (2R,3S)-homoisocitrate, a step in the alpha-aminoadipate pathway for lysine biosynthesis. The chain is Homoaconitase, mitochondrial (lys4) from Emericella nidulans (strain FGSC A4 / ATCC 38163 / CBS 112.46 / NRRL 194 / M139) (Aspergillus nidulans).